The following is a 60-amino-acid chain: VLCPAWLFLDVLFSTASIMHLCAISVDRYIAIKKPIQANQYNSRATAFIKITVVWLISIG.

The Extracellular segment spans residues 1 to 4 (VLCP). The chain crosses the membrane as a helical span at residues 5–26 (AWLFLDVLFSTASIMHLCAISV). Ergotamine is bound by residues Asp10 and Thr15. The short motif at 27–29 (DRY) is the DRY motif; important for ligand-induced conformation changes element. Over 27–46 (DRYIAIKKPIQANQYNSRAT) the chain is Cytoplasmic. Residues 47-60 (AFIKITVVWLISIG) traverse the membrane as a helical segment.

Belongs to the G-protein coupled receptor 1 family. As to quaternary structure, interacts (via C-terminus) with MPDZ. In terms of tissue distribution, detected in aorta, renal artery, jugular vein, vena cava and femoral vein.

It is found in the cell membrane. Its subcellular location is the synapse. The protein localises to the synaptosome. Functionally, G-protein coupled receptor for 5-hydroxytryptamine (serotonin). Also functions as a receptor for various ergot alkaloid derivatives and psychoactive substances. Ligand binding causes a conformation change that triggers signaling via guanine nucleotide-binding proteins (G proteins) and modulates the activity of downstream effectors. HTR2B is coupled to G(q)/G(11) G alpha proteins and activates phospholipase C-beta, releasing diacylglycerol (DAG) and inositol 1,4,5-trisphosphate (IP3) second messengers that modulate the activity of phosphatidylinositol 3-kinase and promote the release of Ca(2+) ions from intracellular stores, respectively. Beta-arrestin family members inhibit signaling via G proteins and mediate activation of alternative signaling pathways. Plays a role in the regulation of dopamine and 5-hydroxytryptamine release, 5-hydroxytryptamine uptake and in the regulation of extracellular dopamine and 5-hydroxytryptamine levels, and thereby affects neural activity. May play a role in the perception of pain. Plays a role in the regulation of behavior, including impulsive behavior. Required for normal proliferation of embryonic cardiac myocytes and normal heart development. Protects cardiomyocytes against apoptosis. Plays a role in the adaptation of pulmonary arteries to chronic hypoxia. Plays a role in vasoconstriction. Required for normal osteoblast function and proliferation, and for maintaining normal bone density. Required for normal proliferation of the interstitial cells of Cajal in the intestine. The polypeptide is 5-hydroxytryptamine receptor 2B (HTR2B) (Sus scrofa (Pig)).